Reading from the N-terminus, the 401-residue chain is tRNA N6-adenosine threonylcarbamoyltransferase (401 aa).

The Fe cation site is built by His111 and His115. Residues 191-195, Asp223, Gly236, and Asn336 each bind substrate; that span reads LASGG. Asp364 serves as a coordination point for Fe cation.

Belongs to the KAE1 / TsaD family. It depends on Fe(2+) as a cofactor.

The protein localises to the cytoplasm. It carries out the reaction L-threonylcarbamoyladenylate + adenosine(37) in tRNA = N(6)-L-threonylcarbamoyladenosine(37) in tRNA + AMP + H(+). Required for the formation of a threonylcarbamoyl group on adenosine at position 37 (t(6)A37) in tRNAs that read codons beginning with adenine. Is involved in the transfer of the threonylcarbamoyl moiety of threonylcarbamoyl-AMP (TC-AMP) to the N6 group of A37, together with TsaE and TsaB. TsaD likely plays a direct catalytic role in this reaction. The protein is tRNA N6-adenosine threonylcarbamoyltransferase of Tropheryma whipplei (strain TW08/27) (Whipple's bacillus).